We begin with the raw amino-acid sequence, 210 residues long: ATP-dependent Clp protease proteolytic subunit (210 aa).

Residue Ser-107 is the Nucleophile of the active site. His-132 is a catalytic residue.

Belongs to the peptidase S14 family. Fourteen ClpP subunits assemble into 2 heptameric rings which stack back to back to give a disk-like structure with a central cavity, resembling the structure of eukaryotic proteasomes.

It localises to the cytoplasm. The enzyme catalyses Hydrolysis of proteins to small peptides in the presence of ATP and magnesium. alpha-casein is the usual test substrate. In the absence of ATP, only oligopeptides shorter than five residues are hydrolyzed (such as succinyl-Leu-Tyr-|-NHMec, and Leu-Tyr-Leu-|-Tyr-Trp, in which cleavage of the -Tyr-|-Leu- and -Tyr-|-Trp bonds also occurs).. Its function is as follows. Cleaves peptides in various proteins in a process that requires ATP hydrolysis. Has a chymotrypsin-like activity. Plays a major role in the degradation of misfolded proteins. The protein is ATP-dependent Clp protease proteolytic subunit of Cereibacter sphaeroides (strain ATCC 17025 / ATH 2.4.3) (Rhodobacter sphaeroides).